Here is a 522-residue protein sequence, read N- to C-terminus: Vicilin-like seed storage protein At4g36700 (522 aa).

Positions 1–25 (MTRFAVLPLSVLLLVLLFLCTESLA) are cleaved as a signal peptide. N-linked (GlcNAc...) asparagine glycosylation is found at Asn-206, Asn-303, Asn-341, Asn-374, and Asn-414. Positions 265 to 421 (FNVFESEPDF…SLNVSSVTID (157 aa)) constitute a Cupin type-1 domain. Residues 457-522 (DERKRRHDER…EWEMEGEEES (66 aa)) are disordered. Composition is skewed to basic and acidic residues over residues 466 to 491 (RKKE…EKKR) and 501 to 515 (EELR…KEWE).

The protein belongs to the 7S seed storage protein family.

In terms of biological role, seed storage protein. The sequence is that of Vicilin-like seed storage protein At4g36700 from Arabidopsis thaliana (Mouse-ear cress).